The chain runs to 153 residues: Putative transmembrane protein INAFM2 (153 aa).

The segment covering 1–23 has biased composition (basic and acidic residues); that stretch reads MKERDAAPAERGKPATYTGDKKA. The segment at 1–24 is disordered; that stretch reads MKERDAAPAERGKPATYTGDKKAK. A helical transmembrane segment spans residues 36–56; that stretch reads LATVFAYVLSVSLAAIVLAVY. A disordered region spans residues 66-153; that stretch reads AGTSGGAAGP…EETAAAPGSR (88 aa). The span at 79-101 shows a compositional bias: low complexity; sequence GSNATGPSGTSGAAAAGPNTTGS. Positions 118-131 are enriched in pro residues; the sequence is PAPPEPPADSPPAG.

Its subcellular location is the membrane. The sequence is that of Putative transmembrane protein INAFM2 from Homo sapiens (Human).